We begin with the raw amino-acid sequence, 1039 residues long: MQVLPPSSTGGPSRLFIMRPVATTLLMVAILLAGIIGYRALPVSALPEVDYPTIQVVTLYPGASPDVMTSAVTAPLERQFGQMSGLKQMSSQSSGGASVITLQFQLTLPLNVAEQEVQAAINAATNLLPSDLPNPPVYSKVNPADPPIMTLAVTSTAMPMTQVEDMVETRVAQKISQISGVGLVTLSGGQRPAVRVKLNAQAIAALGLTSETVRTAITGANVNSAKGSLDGPSRAVTLSANDQMQSAEEYRQLIIAYQNGAPIRLGDVATVEQGAENSWLGAWANKEQAIVMNVQRQPGANIISTADSIRQMLPQLTESLPKSVKVTVLSDRTTNIRASVDDTQFELMMAIALVVMIIYLFLRNIPATIIPGVAVPLSLIGTFAVMVFLDFSINNLTLMALTIATGFVVDDAIVVIENISRYIEKGEKPLAAALKGAGEIGFTIISLTFSLIAVLIPLLFMGDIVGRLFREFAITLAVAILISAVVSLTLTPMMCARMLSQESLRKQNRFSRASEKMFDRIIAAYGRGLAKVLNHPWLTLSVALSTLLLSVLLWVFIPKGFFPVQDNGIIQGTLQAPQSSSFANMAQRQRQVADVILQDPAVQSLTSFVGVDGTNPSLNSARLQINLKPLDERDDRVQKVIARLQTAVDKVPGVDLFLQPTQDLTIDTQVSRTQYQFTLQATSLDALSTWVPQLMEKLQQLPQLSDVSSDWQDKGLVAYVNVDRDSASRLGISMADVDNALYNAFGQRLISTIYTQANQYRVVLEHNTENTPGLAALDTIRLTSSDGGVVPLSSIAKIEQRFAPLSINHLDQFPVTTISFNVPDNYSLGHAVQAIMDTEKTLNLPVDITTQFGSTLAFQSALGSTVWLIVAAVVAMYIVLGILYESFIHPITILSTLPTAGVGALLALMIAGSELDVIAIIGIILLIGIVKKNAIMMIDFALAAEREQGMSPRDAIYQACLLRFRPILMTTLAALLGALPLMLSTGVGAELRRPLGIGMVGGLIVSQVLTLFTTPVIYLLFDRLALWTKSRFARHEEEA.

The next 11 helical transmembrane spans lie at Leu15–Gly37, Phe345–Leu362, Ala367–Leu389, Leu396–Asn418, Gly438–Phe460, Phe472–Met494, His535–Ile557, Val866–Ile888, Leu908–Val930, Ile967–Ala989, and Met999–Phe1021.

It belongs to the resistance-nodulation-cell division (RND) (TC 2.A.6) family. MdtB subfamily. In terms of assembly, part of a tripartite efflux system composed of MdtA, MdtB and MdtC. MdtB forms a heteromultimer with MdtC.

It is found in the cell inner membrane. The chain is Multidrug resistance protein MdtB from Shigella flexneri.